Reading from the N-terminus, the 188-residue chain is NANOG neighbor homeobox (188 aa).

The disordered stretch occupies residues 28–106 (ETILANKKQS…NEKQKQYPEK (79 aa)). Positions 57-106 (QNGKQKWREEGEAGRKREREKEEKNEKELQDEQENKRKRENEKQKQYPEK) are enriched in basic and acidic residues. The segment at residues 102-161 (QYPEKRLVSKSLMHTLWAKFKLNRCPTIQESLSLSFEFDMTHKQISQWFCKTRKKYNKEM) is a DNA-binding region (homeobox).

It is found in the nucleus. In Homo sapiens (Human), this protein is NANOG neighbor homeobox (NANOGNB).